Here is a 183-residue protein sequence, read N- to C-terminus: Putative 3-methyladenine DNA glycosylase (183 aa).

Belongs to the DNA glycosylase MPG family.

The polypeptide is Putative 3-methyladenine DNA glycosylase (Rickettsia peacockii (strain Rustic)).